The chain runs to 430 residues: Flavin-dependent monooxygenase eupH (430 aa).

FAD-binding positions include 11-14 (AGIG), 33-34 (ER), glutamine 43, arginine 107, tyrosine 282, and aspartate 306.

It belongs to the aromatic-ring hydroxylase family. It depends on FAD as a cofactor.

The protein operates within secondary metabolite biosynthesis; terpenoid biosynthesis. Flavin-dependent monooxygenase; part of the gene cluster that mediates the biosynthesis of eupenifeldin, a bistropolone meroterpenoid that acts as an antitumor agent. The first step of eupenifeldin biosynthesis is the biosynthesis of 3-methylorcinaldehyde performed by the non-reducing polyketide synthase eupA. Oxidative dearomatization of 3-methylorcinaldehyde likely catalyzed by the FAD-dependent monooxygenase eupB is followed by oxidative ring expansion by the 2-oxoglutarate-dependent dioxygenase eupC to provide the first tropolone metabolite, tropolone stipitaldehyde. In parallel, generation of sesquiterpene alpha-humulene from farnesylpyrophosphate (FPP) is catalyzed by the terpene cyclase eupE. The cytochrome P450 monooxygenase eupD then hydroxylates humulene to humulenol. The putative Diels-Alderase eupF probably catalyzes the formation of the tropolone-humulene skeleton by linking humulenol and the polyketide moiety. The short-chain dehydrogenase/reductase eupG and the flavin-dependent monooxygenase eupH are also essential for eupenifeldin biosynthesis and are likely the additional decorating enzymes of the tropolone-humulene skeleton to produce final eupenifeldin or derivatives. In Phoma sp, this protein is Flavin-dependent monooxygenase eupH.